The sequence spans 329 residues: Ethylene-responsive transcription factor ERF117 (329 aa).

Disordered stretches follow at residues 25 to 51 (DATD…KPPK) and 71 to 90 (NSTG…FKGV). The segment covering 71 to 86 (NSTGNKAAGNRKTSSG) has biased composition (polar residues). Residues 86 to 143 (GFKGVRRRPWGKFAAEIRNPFEKKRKWLGTFPTEEEAAEAYQKSKREFDERLGLVKQE) constitute a DNA-binding region (AP2/ERF).

Belongs to the AP2/ERF transcription factor family. ERF subfamily.

The protein localises to the nucleus. Functionally, probably acts as a transcriptional activator. Binds to the GCC-box pathogenesis-related promoter element. May be involved in the regulation of gene expression by stress factors and by components of stress signal transduction pathways. The polypeptide is Ethylene-responsive transcription factor ERF117 (ERF117) (Arabidopsis thaliana (Mouse-ear cress)).